Reading from the N-terminus, the 758-residue chain is 5-methyltetrahydropteroyltriglutamate--homocysteine methyltransferase (758 aa).

5-methyltetrahydropteroyltri-L-glutamate contacts are provided by residues 15–18 (RELK) and K114. L-homocysteine contacts are provided by residues 433–435 (IGS) and E486. L-methionine is bound by residues 433–435 (IGS) and E486. 5-methyltetrahydropteroyltri-L-glutamate is bound by residues 517-518 (RC) and W563. D601 serves as a coordination point for L-homocysteine. D601 is an L-methionine binding site. Residue E607 coordinates 5-methyltetrahydropteroyltri-L-glutamate. H643, C645, and E667 together coordinate Zn(2+). The active-site Proton donor is H696. C728 is a binding site for Zn(2+).

Belongs to the vitamin-B12 independent methionine synthase family. It depends on Zn(2+) as a cofactor.

It carries out the reaction 5-methyltetrahydropteroyltri-L-glutamate + L-homocysteine = tetrahydropteroyltri-L-glutamate + L-methionine. Its pathway is amino-acid biosynthesis; L-methionine biosynthesis via de novo pathway; L-methionine from L-homocysteine (MetE route): step 1/1. In terms of biological role, catalyzes the transfer of a methyl group from 5-methyltetrahydrofolate to homocysteine resulting in methionine formation. The chain is 5-methyltetrahydropteroyltriglutamate--homocysteine methyltransferase from Syntrophotalea carbinolica (strain DSM 2380 / NBRC 103641 / GraBd1) (Pelobacter carbinolicus).